Here is an 81-residue protein sequence, read N- to C-terminus: Trefoil factor 3 (81 aa).

The first 22 residues, Met-1–Ala-22, serve as a signal peptide directing secretion. Residues Ser-31–Leu-74 form the P-type domain. Intrachain disulfides connect Cys-33–Cys-59, Cys-43–Cys-58, and Cys-53–Cys-70.

In terms of assembly, monomer. Homodimer; disulfide-linked. In terms of tissue distribution, expressed in goblet cells of the intestines and colon (at protein level). Expressed abundantly in goblet cells of intestine and colon, and at low levels in stomach. No expression in brain, lung, spleen, kidney, uterus, pancreas, liver, heart or thymus.

It localises to the secreted. The protein localises to the extracellular space. Its subcellular location is the extracellular matrix. It is found in the cytoplasm. In terms of biological role, involved in the maintenance and repair of the intestinal mucosa. Promotes the mobility of epithelial cells in healing processes (motogen). This chain is Trefoil factor 3 (Tff3), found in Mus musculus (Mouse).